The sequence spans 245 residues: OVARIAN TUMOR DOMAIN-containing deubiquitinating enzyme 11 (245 aa).

The interval 1 to 37 (MDENHRNPFANASTSARASGSTSASSNSSFSSSVADT) is disordered. A compositionally biased stretch (low complexity) spans 10–35 (ANASTSARASGSTSASSNSSFSSSVA). An OTU domain is found at 101 to 225 (LAELQMEGDG…EVHYNSLYAN (125 aa)). Residue Asp109 is part of the active site. The Nucleophile role is filled by Cys112. His218 is a catalytic residue.

Belongs to the peptidase C85 family.

It carries out the reaction Thiol-dependent hydrolysis of ester, thioester, amide, peptide and isopeptide bonds formed by the C-terminal Gly of ubiquitin (a 76-residue protein attached to proteins as an intracellular targeting signal).. Hydrolase that can remove conjugated ubiquitin from proteins in vitro and may therefore play an important regulatory role at the level of protein turnover by preventing degradation. Inactive cysteine protease. The chain is OVARIAN TUMOR DOMAIN-containing deubiquitinating enzyme 11 from Arabidopsis thaliana (Mouse-ear cress).